Consider the following 544-residue polypeptide: Chaperonin GroEL 4 (544 aa).

ATP-binding positions include 30 to 33 (TLGP), K51, 87 to 91 (DGTTT), G415, and D496.

This sequence belongs to the chaperonin (HSP60) family. As to quaternary structure, forms a cylinder of 14 subunits composed of two heptameric rings stacked back-to-back. Interacts with the co-chaperonin GroES.

The protein resides in the cytoplasm. The catalysed reaction is ATP + H2O + a folded polypeptide = ADP + phosphate + an unfolded polypeptide.. Its function is as follows. Together with its co-chaperonin GroES, plays an essential role in assisting protein folding. The GroEL-GroES system forms a nano-cage that allows encapsulation of the non-native substrate proteins and provides a physical environment optimized to promote and accelerate protein folding. The sequence is that of Chaperonin GroEL 4 from Sinorhizobium medicae (strain WSM419) (Ensifer medicae).